We begin with the raw amino-acid sequence, 533 residues long: Solute carrier family 2, facilitated glucose transporter member 2 (533 aa).

Residues 1 to 17 (MDGKSKMQAEKHLTGTL) are Cytoplasmic-facing. A helical transmembrane segment spans residues 18–38 (VLSVFTAVLGFFQYGYSLGVI). The Extracellular portion of the chain corresponds to 39 to 110 (NAPQKVIEAH…SPHILTMYWS (72 aa)). 2 N-linked (GlcNAc...) asparagine glycosylation sites follow: N64 and N69. The helical transmembrane segment at 111–131 (LSVSMFAVGGMVSSFTVGWIG) threads the bilayer. The Cytoplasmic portion of the chain corresponds to 132–136 (DRLGR). Residues 137–157 (VKAMLVVNVLSIAGNLLMGLA) form a helical membrane-spanning segment. At 158-163 (KMGPSH) the chain is on the extracellular side. A helical transmembrane segment spans residues 164–184 (ILIIAGRAITGLYCGLSSGLV). Over 185 to 199 (PMYVSEVSPTALRGA) the chain is Cytoplasmic. A helical membrane pass occupies residues 200 to 220 (LGTLHQLAIVTGILISQVLGL). Residue Q205 coordinates D-glucose. Residues 221 to 229 (DFLLGNDEL) are Extracellular-facing. The chain crosses the membrane as a helical span at residues 230 to 250 (WPLLLGLSGVAALLQFFLLLL). Residues 251 to 315 (CPESPRYLYI…LFSSSKYRQA (65 aa)) are Cytoplasmic-facing. Residues 316–336 (VIVALMVQISQQFSGINAIFY) traverse the membrane as a helical segment. Residues 326 to 327 (QQ) and N332 contribute to the D-glucose site. The Extracellular portion of the chain corresponds to 337 to 350 (YSTNIFQRAGVGQP). The chain crosses the membrane as a helical span at residues 351–371 (VYATIGVGVVNTVFTVISVFL). N361 provides a ligand contact to D-glucose. The Cytoplasmic portion of the chain corresponds to 372 to 379 (VEKAGRRS). Residues 380-400 (LFLAGLMGMLISAVAMTVGLV) form a helical membrane-spanning segment. Residues 401–413 (LLSQFAWMSYVSM) lie on the Extracellular side of the membrane. A helical membrane pass occupies residues 414–434 (VAIFLFVIFFEVGPGPIPWFI). D-glucose is bound by residues E424 and W432. Residues 435-445 (VAELFSQGPRP) are Cytoplasmic-facing. A helical transmembrane segment spans residues 446–466 (AAIAVAGFCNWACNFIVGMCF). Residues 467-471 (QYIAD) lie on the Extracellular side of the membrane. The chain crosses the membrane as a helical span at residues 472-492 (LCGPYVFVVFAVLLLVFFLFA). Residues 493 to 533 (YLKVPETKGKSFEEIAAAFRRKKLPAKSMTELEDLRGGEEA) lie on the Cytoplasmic side of the membrane.

It belongs to the major facilitator superfamily. Sugar transporter (TC 2.A.1.1) family. Glucose transporter subfamily.

The protein localises to the cell membrane. The enzyme catalyses D-glucose(out) = D-glucose(in). It catalyses the reaction D-fructose(out) = D-fructose(in). The catalysed reaction is L-dehydroascorbate(out) = L-dehydroascorbate(in). It carries out the reaction D-galactose(in) = D-galactose(out). Its activity is regulated as follows. D-glucose and maltose competitively inhibit fructose transport. D-glucose, D-fructose and maltose inhibit deoxyglucose transport. Its function is as follows. Facilitative hexose transporter that mediates the transport of glucose, fructose and galactose. Likely mediates the bidirectional transfer of glucose across the plasma membrane of hepatocytes and is responsible for uptake of glucose by the beta cells. The protein is Solute carrier family 2, facilitated glucose transporter member 2 of Gallus gallus (Chicken).